A 255-amino-acid polypeptide reads, in one-letter code: D-aminoacyl-tRNA deacylase (255 aa).

Belongs to the DtdA deacylase family. Monomer. Zn(2+) serves as cofactor.

The enzyme catalyses a D-aminoacyl-tRNA + H2O = a tRNA + a D-alpha-amino acid + H(+). It catalyses the reaction glycyl-tRNA(Ala) + H2O = tRNA(Ala) + glycine + H(+). D-aminoacyl-tRNA deacylase with broad substrate specificity. By recycling D-aminoacyl-tRNA to D-amino acids and free tRNA molecules, this enzyme counteracts the toxicity associated with the formation of D-aminoacyl-tRNA entities in vivo. The chain is D-aminoacyl-tRNA deacylase from Methanocaldococcus jannaschii (strain ATCC 43067 / DSM 2661 / JAL-1 / JCM 10045 / NBRC 100440) (Methanococcus jannaschii).